The sequence spans 172 residues: Inorganic pyrophosphatase (172 aa).

3 residues coordinate substrate: lysine 26, arginine 40, and tyrosine 52. Residues aspartate 62, aspartate 67, and aspartate 99 each contribute to the Mg(2+) site. Tyrosine 138 is a substrate binding site.

It belongs to the PPase family. Homohexamer. Requires Mg(2+) as cofactor.

It is found in the cytoplasm. The enzyme catalyses diphosphate + H2O = 2 phosphate + H(+). Functionally, catalyzes the hydrolysis of inorganic pyrophosphate (PPi) forming two phosphate ions. This is Inorganic pyrophosphatase from Saccharolobus solfataricus (strain ATCC 35092 / DSM 1617 / JCM 11322 / P2) (Sulfolobus solfataricus).